The primary structure comprises 398 residues: Lysophosphatidylserine lipase ABHD12 (398 aa).

The Cytoplasmic portion of the chain corresponds to 1–74 (MRKRTEPVAL…RKGLWLRLRK (74 aa)). Residues 75–95 (ILFCVLGLYIAIPFLIKLCPG) form a helical membrane-spanning segment. Residues 96-398 (IQAKLIFLNF…LGKSEPEHQH (303 aa)) lie on the Extracellular side of the membrane. N-linked (GlcNAc...) asparagine glycosylation is present at N123. S246 (nucleophile) is an active-site residue. Catalysis depends on charge relay system residues D333 and H372.

The protein belongs to the serine esterase family.

It localises to the endoplasmic reticulum membrane. The catalysed reaction is 1-(9Z-octadecenoyl)-sn-glycero-3-phospho-L-serine + H2O = sn-glycero-3-phospho-L-serine + (9Z)-octadecenoate + H(+). It carries out the reaction 1-(9Z-octadecenoyl)-sn-glycero-3-phospho-(1'-sn-glycerol) + H2O = sn-glycero-3-phospho-(1'-sn-glycerol) + (9Z)-octadecenoate + H(+). The enzyme catalyses 1-(9Z-octadecenoyl)-sn-glycero-3-phospho-(1D-myo-inositol) + H2O = sn-glycero-3-phospho-1D-myo-inositol + (9Z)-octadecenoate + H(+). It catalyses the reaction 1-(9Z-octadecenoyl)-sn-glycero-3-phosphoethanolamine + H2O = sn-glycero-3-phosphoethanolamine + (9Z)-octadecenoate + H(+). The catalysed reaction is 1-(9Z-octadecenoyl)-sn-glycero-3-phosphocholine + H2O = 1-(9Z-octadecenoyl)-sn-glycerol + phosphocholine + H(+). It carries out the reaction 2-(9Z-octadecenoyl)-glycerol + H2O = glycerol + (9Z)-octadecenoate + H(+). The enzyme catalyses 1-hexadecanoyl-sn-glycero-3-phospho-L-serine + H2O = sn-glycero-3-phospho-L-serine + hexadecanoate + H(+). It catalyses the reaction 2-(5Z,8Z,11Z,14Z-eicosatetraenoyl)-glycerol + H2O = glycerol + (5Z,8Z,11Z,14Z)-eicosatetraenoate + H(+). The catalysed reaction is Hydrolyzes glycerol monoesters of long-chain fatty acids.. It carries out the reaction 1-decanoylglycerol + H2O = decanoate + glycerol + H(+). The enzyme catalyses 1-dodecanoylglycerol + H2O = dodecanoate + glycerol + H(+). It catalyses the reaction 1-tetradecanoylglycerol + H2O = tetradecanoate + glycerol + H(+). The catalysed reaction is 2-hexadecanoylglycerol + H2O = glycerol + hexadecanoate + H(+). It carries out the reaction 1-(9Z-octadecenoyl)-glycerol + H2O = glycerol + (9Z)-octadecenoate + H(+). The enzyme catalyses 2-(9Z,12Z-octadecadienoyl)-glycerol + H2O = (9Z,12Z)-octadecadienoate + glycerol + H(+). It catalyses the reaction 1-(5Z,8Z,11Z,14Z-eicosatetraenoyl)-glycerol + H2O = glycerol + (5Z,8Z,11Z,14Z)-eicosatetraenoate + H(+). The catalysed reaction is 1-(9Z,12Z-octadecadienoyl)-glycerol + H2O = (9Z,12Z)-octadecadienoate + glycerol + H(+). It carries out the reaction 1-hexadecanoylglycerol + H2O = glycerol + hexadecanoate + H(+). The enzyme catalyses 1-octadecanoylglycerol + H2O = octadecanoate + glycerol + H(+). It catalyses the reaction 1-octadecanoyl-2-(9,10-epoxyoctadecanoyl)-sn-glycero-3-phospho-L-serine + H2O = 9,10-epoxyoctadecanoate + 1-octadecanoyl-sn-glycero-3-phosphoserine + H(+). The catalysed reaction is 1-octadecanoyl-2-(10-hydroxyoctadecanoyl)-sn-glycero-3-phospho-L-serine + H2O = 1-octadecanoyl-sn-glycero-3-phosphoserine + 10-hydroxyoctadecanoate + H(+). It carries out the reaction 1-hexadecanoyl-2-(10-hydroxyoctadecanoyl)-sn-glycero-3-phospho-L-serine + H2O = 10-hydroxyoctadecanoate + 1-hexadecanoyl-sn-glycero-3-phospho-L-serine + H(+). Its function is as follows. Lysophosphatidylserine (LPS) lipase that mediates the hydrolysis of lysophosphatidylserine, a class of signaling lipids that regulates immunological and neurological processes. Represents a major lysophosphatidylserine lipase in the brain, thereby playing a key role in the central nervous system. Also able to hydrolyze oxidized phosphatidylserine; oxidized phosphatidylserine is produced in response to severe inflammatory stress and constitutes a proapoptotic 'eat me' signal. Also has monoacylglycerol (MAG) lipase activity: hydrolyzes 2-arachidonoylglycerol (2-AG), thereby acting as a regulator of endocannabinoid signaling pathways. Has a strong preference for very-long-chain lipid substrates; substrate specificity is likely due to improved catalysis and not improved substrate binding. This is Lysophosphatidylserine lipase ABHD12 from Macaca fascicularis (Crab-eating macaque).